Here is a 449-residue protein sequence, read N- to C-terminus: MLSSQTSSIFTVSRLNQTVRLLLEQEMGQVWISGEISNFTQPASGHWYFTLKDDTAQVRCAMFRNSNRRVTFRPQHGQQVLVRANITLYEPRGDYQIIAESMQPAGEGLLQQKYEQLKAKLHAEGLFDQQHKQPLPSPAHCVGVITSKTGAALHDILHVLKRRDPSLPVIIYPTAVQGDDAPGQIVRAIELANARGECDVLIVGRGGGSLEDLWSFNDERVARAIFASRIPVVSAVGHETDVTIADFVADLRAPTPSAAAEIVSRNQQELLRQIQSAQQRLGMAMDYYLANRSRRFTQIFHRLQQQHPQLRLARQQTALERLRQRMGFALEARIKQANQRQQRVSQRLSQQNPQPRIHRAQSRIQQLEYRLTENIRSRLSEQRERFGNAVTHLEAVSPLATLARGYTVSTTTDGKVLKKIKQVKAGDIMTTRLEDGWLESEVKSVTPGT.

The protein belongs to the XseA family. In terms of assembly, heterooligomer composed of large and small subunits.

It is found in the cytoplasm. It carries out the reaction Exonucleolytic cleavage in either 5'- to 3'- or 3'- to 5'-direction to yield nucleoside 5'-phosphates.. In terms of biological role, bidirectionally degrades single-stranded DNA into large acid-insoluble oligonucleotides, which are then degraded further into small acid-soluble oligonucleotides. This is Exodeoxyribonuclease 7 large subunit from Salmonella heidelberg (strain SL476).